The sequence spans 1315 residues: ESX secretion system protein EccC (1315 aa).

Basic residues predominate over residues 1-11; sequence MSTVLVRRKER. The tract at residues 1–21 is disordered; that stretch reads MSTVLVRRKERRQPPQMPRGE. Residues 1–40 lie on the Cytoplasmic side of the membrane; that stretch reads MSTVLVRRKERRQPPQMPRGEILLESPPELPEVVTNSFQN. Residues 41 to 61 form a helical membrane-spanning segment; that stretch reads VLMYLPMAAGSAAMVFTFLNH. Residues 62-64 lie on the Extracellular side of the membrane; sequence RNT. Residues 65 to 85 traverse the membrane as a helical segment; that stretch reads LQLVAGGMFALSMFGMMFGQL. Residues 86-1315 lie on the Cytoplasmic side of the membrane; sequence SQQSGERKTK…RLIQTAYRES (1230 aa). FtsK domains are found at residues 456–656 and 813–1004; these read GRPL…MESR and RDPY…YESE. 479–486 provides a ligand contact to ATP; the sequence is GATGSGKS. E593 is a catalytic residue. The tract at residues 721 to 1315 is binds EsxB; that stretch reads RPQVVEQPQP…RLIQTAYRES (595 aa). Residues 834 to 839, T1031, 1119 to 1124, Q1293, and 1310 to 1311 each bind ATP; these read QTGKST, ECGKSN, and TA. Residues 1099 to 1282 form the FtsK 3 domain; it reads LSPVYLDFNT…MSGNKDEGIL (184 aa).

The cytosolic domain can form homodimers. Binds EsxB, which leads to multimerization, however EsxA disassembles the multimers, possibly by making EccC-EsxA-EsxB trimers instead of EccC-EsxB-EsxB-EccC tetramers. Forms a complex with EsxA and EsxB, probably wholly mediated by EsxB.

It is found in the cell membrane. With respect to regulation, esxB binding to the third FtsK domain causes multimerization; a subsequent unknown step relieves the allosteric inhibition of linker 2 on FtsK domain 1, activating the ATPase activity; a mutant EsxB ('Ala-98') does not cause multimers to form. Part of the ESX specialized secretion system, which exports proteins from the cell including EsxA (ESAT-6) and EsxB (CFP-10). Has weak intrinsic ATPase activity; probably only the first FtsK domain can hydrolyze ATP. Might be the translocase subunit. The sequence is that of ESX secretion system protein EccC from Thermomonospora curvata (strain ATCC 19995 / DSM 43183 / JCM 3096 / KCTC 9072 / NBRC 15933 / NCIMB 10081 / Henssen B9).